Consider the following 282-residue polypeptide: Bifunctional protein FolD 2 (282 aa).

NADP(+)-binding positions include 165-167 (GRS) and S190.

This sequence belongs to the tetrahydrofolate dehydrogenase/cyclohydrolase family. In terms of assembly, homodimer.

It carries out the reaction (6R)-5,10-methylene-5,6,7,8-tetrahydrofolate + NADP(+) = (6R)-5,10-methenyltetrahydrofolate + NADPH. The catalysed reaction is (6R)-5,10-methenyltetrahydrofolate + H2O = (6R)-10-formyltetrahydrofolate + H(+). It functions in the pathway one-carbon metabolism; tetrahydrofolate interconversion. Its function is as follows. Catalyzes the oxidation of 5,10-methylenetetrahydrofolate to 5,10-methenyltetrahydrofolate and then the hydrolysis of 5,10-methenyltetrahydrofolate to 10-formyltetrahydrofolate. The protein is Bifunctional protein FolD 2 of Acinetobacter baylyi (strain ATCC 33305 / BD413 / ADP1).